The sequence spans 277 residues: MKKTQQKEIENVTNITGVRQIELWRRDDLQHPRLDEVAEEVPVALVYNGISHVVMMASPKDLEYFALGFSLSEGIIESPRDIFGMDVVPSCNGLEVQIELSSRRFMGLKERRRALAGRTGCGVCGVEQLNDIGKPVQPLPFTQTFDLNKLDDALRHLNDFQPVGQLTGCTHAAAWMLPSGELVGGHEDVGRHVALDKLLGRRSQEGESWQQGAVLVSSRASYEMVQKSAMCGVEILFAVSAATTLAVEVAERCNLTLVGFCKPGRATVYTHPQRLSN.

Cys-121 acts as the Cysteine persulfide intermediate in catalysis. 260-265 provides a ligand contact to Mo-bis(molybdopterin guanine dinucleotide); that stretch reads FCKPGR.

Belongs to the FdhD family.

The protein localises to the cytoplasm. Functionally, required for formate dehydrogenase (FDH) activity. Acts as a sulfur carrier protein that transfers sulfur from IscS to the molybdenum cofactor prior to its insertion into FDH. The polypeptide is Sulfur carrier protein FdhD (Escherichia coli O81 (strain ED1a)).